Consider the following 254-residue polypeptide: 5-oxoprolinase subunit A (254 aa).

The protein belongs to the LamB/PxpA family. Forms a complex composed of PxpA, PxpB and PxpC.

It carries out the reaction 5-oxo-L-proline + ATP + 2 H2O = L-glutamate + ADP + phosphate + H(+). Catalyzes the cleavage of 5-oxoproline to form L-glutamate coupled to the hydrolysis of ATP to ADP and inorganic phosphate. The protein is 5-oxoprolinase subunit A of Brevibacillus brevis (strain 47 / JCM 6285 / NBRC 100599).